The following is a 319-amino-acid chain: Thioredoxin reductase (319 aa).

FAD is bound at residue 36–43; sequence TGINKGGQ. The cysteines at positions 136 and 139 are disulfide-linked. 288–297 contacts FAD; the sequence is DVIDHVYRQA.

It belongs to the class-II pyridine nucleotide-disulfide oxidoreductase family. In terms of assembly, homodimer. The cofactor is FAD.

It localises to the cytoplasm. It carries out the reaction [thioredoxin]-dithiol + NADP(+) = [thioredoxin]-disulfide + NADPH + H(+). In Buchnera aphidicola subsp. Schizaphis graminum (strain Sg), this protein is Thioredoxin reductase (trxB).